A 660-amino-acid polypeptide reads, in one-letter code: 1-deoxy-D-xylulose-5-phosphate synthase (660 aa).

Residues His-86 and 127–129 contribute to the thiamine diphosphate site; that span reads AHS. Residue Asp-164 coordinates Mg(2+). Residues 165–166, Asn-196, Tyr-306, and Glu-388 contribute to the thiamine diphosphate site; that span reads GS. Residue Asn-196 coordinates Mg(2+).

It belongs to the transketolase family. DXPS subfamily. Homodimer. Mg(2+) is required as a cofactor. Requires thiamine diphosphate as cofactor.

It catalyses the reaction D-glyceraldehyde 3-phosphate + pyruvate + H(+) = 1-deoxy-D-xylulose 5-phosphate + CO2. It functions in the pathway metabolic intermediate biosynthesis; 1-deoxy-D-xylulose 5-phosphate biosynthesis; 1-deoxy-D-xylulose 5-phosphate from D-glyceraldehyde 3-phosphate and pyruvate: step 1/1. Its function is as follows. Catalyzes the acyloin condensation reaction between C atoms 2 and 3 of pyruvate and glyceraldehyde 3-phosphate to yield 1-deoxy-D-xylulose-5-phosphate (DXP). The protein is 1-deoxy-D-xylulose-5-phosphate synthase of Gluconobacter oxydans (strain 621H) (Gluconobacter suboxydans).